Reading from the N-terminus, the 268-residue chain is Glucosamine-6-phosphate deaminase (268 aa).

The active-site Proton acceptor; for enolization step is Asp67. Asn136 serves as the catalytic For ring-opening step. The Proton acceptor; for ring-opening step role is filled by His138. The For ring-opening step role is filled by Glu143.

It belongs to the glucosamine/galactosamine-6-phosphate isomerase family. NagB subfamily. In terms of assembly, homohexamer.

It catalyses the reaction alpha-D-glucosamine 6-phosphate + H2O = beta-D-fructose 6-phosphate + NH4(+). Its pathway is amino-sugar metabolism; N-acetylneuraminate degradation; D-fructose 6-phosphate from N-acetylneuraminate: step 5/5. Its function is as follows. Catalyzes the reversible isomerization-deamination of glucosamine 6-phosphate (GlcN6P) to form fructose 6-phosphate (Fru6P) and ammonium ion. The sequence is that of Glucosamine-6-phosphate deaminase from Shewanella loihica (strain ATCC BAA-1088 / PV-4).